A 313-amino-acid chain; its full sequence is MMENFKHTTVLLDEAVNGLNIRPDGIYIDGTFGRGGHSRLILSQLGEEGRLLAIDRDPQAIAVAQTINDPRFSIIHGPFSALADYVAERELTGKIDGILLDLGVSSPQLDDAERGFSFMRDGPLDMRMDPTRGQSAAEWLQTAEEADIAWVLKTFGEERFAKRIAHAIVERNREQPMTRTKELAEVVAAATPVKDKFKHPATRTFQAVRIWVNSELEEIEQALKSSLSVLASGGRLSIISFHSLEDRIVKRFMREQSRGPQVPAGLPMTEAQLKKLGGRELRALGKLMPGEKEVAENPRARSSVLRIAERTNA.

S-adenosyl-L-methionine contacts are provided by residues 35 to 37, Asp-55, Phe-79, Asp-101, and Gln-108; that span reads GGH.

Belongs to the methyltransferase superfamily. RsmH family.

It is found in the cytoplasm. It carries out the reaction cytidine(1402) in 16S rRNA + S-adenosyl-L-methionine = N(4)-methylcytidine(1402) in 16S rRNA + S-adenosyl-L-homocysteine + H(+). Its function is as follows. Specifically methylates the N4 position of cytidine in position 1402 (C1402) of 16S rRNA. The chain is Ribosomal RNA small subunit methyltransferase H from Salmonella typhi.